A 625-amino-acid chain; its full sequence is Putative xanthine/uracil permease C887.17 (625 aa).

Helical transmembrane passes span 49–69 (AGLT…TILV), 107–127 (AAIS…PVGM), 154–174 (EALL…VIGL), 192–212 (AGIG…LGVI), 246–263 (MWVG…LMMY), 328–348 (FAIA…GTLY), 369–389 (VAYI…CSPV), 406–426 (GILG…APIF), 429–449 (IPVW…MKST), and 465–485 (ITIA…AGII). The interval 595-625 (EAVGESESFSNRQQDFRTPYAGIDMDTDDRI) is disordered.

Belongs to the nucleobase:cation symporter-2 (NCS2) (TC 2.A.40) family. Azg-like subfamily.

The protein resides in the golgi apparatus membrane. This chain is Putative xanthine/uracil permease C887.17, found in Schizosaccharomyces pombe (strain 972 / ATCC 24843) (Fission yeast).